A 429-amino-acid chain; its full sequence is Enolase (429 aa).

Gln-167 serves as a coordination point for (2R)-2-phosphoglycerate. Catalysis depends on Glu-209, which acts as the Proton donor. Mg(2+)-binding residues include Asp-246, Glu-289, and Asp-316. (2R)-2-phosphoglycerate-binding residues include Lys-341, Arg-370, Ser-371, and Lys-392. Catalysis depends on Lys-341, which acts as the Proton acceptor.

This sequence belongs to the enolase family. Component of the RNA degradosome, a multiprotein complex involved in RNA processing and mRNA degradation. Requires Mg(2+) as cofactor.

The protein localises to the cytoplasm. Its subcellular location is the secreted. It localises to the cell surface. The enzyme catalyses (2R)-2-phosphoglycerate = phosphoenolpyruvate + H2O. Its pathway is carbohydrate degradation; glycolysis; pyruvate from D-glyceraldehyde 3-phosphate: step 4/5. Functionally, catalyzes the reversible conversion of 2-phosphoglycerate (2-PG) into phosphoenolpyruvate (PEP). It is essential for the degradation of carbohydrates via glycolysis. This Pseudomonas fluorescens (strain ATCC BAA-477 / NRRL B-23932 / Pf-5) protein is Enolase.